A 493-amino-acid chain; its full sequence is GTPase Der (493 aa).

2 consecutive EngA-type G domains span residues 3 to 166 (PVVA…SGKG) and 207 to 380 (LKLA…DCAT). GTP is bound by residues 9–16 (GRPNVGKS), 56–60 (DTGGI), 118–121 (NKTD), 213–220 (GKPNVGKS), 260–264 (DTAGV), and 325–328 (NKWD). Residues 381–465 (RRVNTSLLTR…PIRIQFKEGA (85 aa)) form the KH-like domain.

This sequence belongs to the TRAFAC class TrmE-Era-EngA-EngB-Septin-like GTPase superfamily. EngA (Der) GTPase family. As to quaternary structure, associates with the 50S ribosomal subunit.

In terms of biological role, GTPase that plays an essential role in the late steps of ribosome biogenesis. The chain is GTPase Der from Photorhabdus laumondii subsp. laumondii (strain DSM 15139 / CIP 105565 / TT01) (Photorhabdus luminescens subsp. laumondii).